We begin with the raw amino-acid sequence, 266 residues long: Beta-lactamase OXA-20 (266 aa).

An N-terminal signal peptide occupies residues 1 to 21; that stretch reads MIIRFLALLFSAVVLVSLGHA. Residue S72 is the Acyl-ester intermediate of the active site. N6-carboxylysine is present on K75. 210–212 contacts substrate; it reads KTG.

It belongs to the class-D beta-lactamase family.

The enzyme catalyses a beta-lactam + H2O = a substituted beta-amino acid. Inhibited by clavulanic acid. Its function is as follows. This is an oxacillin-hydrolyzing beta-lactamase. This Pseudomonas aeruginosa protein is Beta-lactamase OXA-20 (bla).